The sequence spans 64 residues: Large ribosomal subunit protein bL32 (64 aa).

Residues 1–35 (MAVQKSRVTPSRRGMRRAHDALSAKQLSTDPTTGE) are disordered.

This sequence belongs to the bacterial ribosomal protein bL32 family.

The protein is Large ribosomal subunit protein bL32 of Stenotrophomonas maltophilia (strain R551-3).